A 258-amino-acid polypeptide reads, in one-letter code: Indole-3-glycerol phosphate synthase (258 aa).

It belongs to the TrpC family.

It catalyses the reaction 1-(2-carboxyphenylamino)-1-deoxy-D-ribulose 5-phosphate + H(+) = (1S,2R)-1-C-(indol-3-yl)glycerol 3-phosphate + CO2 + H2O. Its pathway is amino-acid biosynthesis; L-tryptophan biosynthesis; L-tryptophan from chorismate: step 4/5. The polypeptide is Indole-3-glycerol phosphate synthase (Nautilia profundicola (strain ATCC BAA-1463 / DSM 18972 / AmH)).